The primary structure comprises 644 residues: Sentrin-specific protease 1 (644 aa).

The segment at M1–M200 is interaction with CCAR2. 4 positions are modified to phosphoserine: S57, S117, S132, and S157. Residues Q92 to S117 form a disordered region. A compositionally biased stretch (low complexity) spans R99 to S117. Disordered regions lie at residues P156 to E184 and S283 to S312. The Nuclear localization signal signature appears at P171 to R177. The interval L450–C613 is protease. Active-site residues include H533 and D550. Residues K574–K577 carry the Nuclear localization signal motif. The active-site Nucleophile is the C603. The Nuclear localization signal motif lies at P628–M634. The Nuclear export signal motif lies at V635 to L644.

It belongs to the peptidase C48 family. In terms of assembly, interacts with RBM33; promoting ALKBH5 desumoylation and subsequent activation. As to expression, highly expressed in testis. Expressed at lower levels in thymus, pancreas, spleen, liver, ovary and small intestine.

The protein resides in the nucleus. It localises to the cytoplasm. In terms of biological role, protease that catalyzes two essential functions in the SUMO pathway. The first is the hydrolysis of an alpha-linked peptide bond at the C-terminal end of the small ubiquitin-like modifier (SUMO) propeptides, SUMO1, SUMO2 and SUMO3 leading to the mature form of the proteins. The second is the deconjugation of SUMO1, SUMO2 and SUMO3 from targeted proteins, by cleaving an epsilon-linked peptide bond between the C-terminal glycine of the mature SUMO and the lysine epsilon-amino group of the target protein. Deconjugates SUMO1 from HIPK2. Deconjugates SUMO1 from HDAC1 and BHLHE40/DEC1, which decreases its transcriptional repression activity. Deconjugates SUMO1 from CLOCK, which decreases its transcriptional activation activity. Deconjugates SUMO2 from MTA1. Inhibits N(6)-methyladenosine (m6A) RNA methylation by mediating SUMO1 deconjugation from METTL3 and ALKBH5: METTL3 inhibits the m6A RNA methyltransferase activity, while ALKBH5 desumoylation promotes m6A demethylation. Desumoylates CCAR2 which decreases its interaction with SIRT1. Deconjugates SUMO1 from GPS2. In Homo sapiens (Human), this protein is Sentrin-specific protease 1 (SENP1).